The following is a 281-amino-acid chain: N-acetylmuramic acid 6-phosphate etherase (281 aa).

An SIS domain is found at 63–226 (IVPRMKQGGR…TTSVMIQLGR (164 aa)). Residue E91 is the Proton donor of the active site. E122 is a catalytic residue.

The protein belongs to the GCKR-like family. MurNAc-6-P etherase subfamily. Homodimer.

It catalyses the reaction N-acetyl-D-muramate 6-phosphate + H2O = N-acetyl-D-glucosamine 6-phosphate + (R)-lactate. The protein operates within amino-sugar metabolism; N-acetylmuramate degradation. Functionally, specifically catalyzes the cleavage of the D-lactyl ether substituent of MurNAc 6-phosphate, producing GlcNAc 6-phosphate and D-lactate. This is N-acetylmuramic acid 6-phosphate etherase from Bacteroides fragilis (strain ATCC 25285 / DSM 2151 / CCUG 4856 / JCM 11019 / LMG 10263 / NCTC 9343 / Onslow / VPI 2553 / EN-2).